A 532-amino-acid chain; its full sequence is Cocaine esterase (532 aa).

Position 1 is a pyrrolidone carboxylic acid (Q1). C69 and C96 form a disulfide bridge. The active-site Acyl-ester intermediate is the S201. N249 carries N-linked (GlcNAc...) asparagine glycosylation. C253 and C264 are disulfide-bonded. Catalysis depends on charge relay system residues E318 and H430. The Prevents secretion from ER motif lies at 529–532; that stretch reads HTEL.

The protein belongs to the type-B carboxylesterase/lipase family. In terms of assembly, monomer.

The protein resides in the endoplasmic reticulum lumen. It catalyses the reaction a carboxylic ester + H2O = an alcohol + a carboxylate + H(+). It carries out the reaction cocaine + H2O = ecgonine methyl ester + benzoate + H(+). The catalysed reaction is 2-(5Z,8Z,11Z,14Z-eicosatetraenoyl)-glycerol + H2O = glycerol + (5Z,8Z,11Z,14Z)-eicosatetraenoate + H(+). The enzyme catalyses prostaglandin E2 1-glyceryl ester + H2O = prostaglandin E2 + glycerol + H(+). It catalyses the reaction prostaglandin F2alpha 1-glyceryl ester + H2O = prostaglandin F2alpha + glycerol + H(+). In terms of biological role, involved in the detoxification of xenobiotics and in the activation of ester and amide prodrugs. Converts monoacylglycerides to free fatty acids and glycerol. Hydrolyzes of 2-arachidonoylglycerol and prostaglandins. The chain is Cocaine esterase (CES2) from Oryctolagus cuniculus (Rabbit).